We begin with the raw amino-acid sequence, 918 residues long: Valine--tRNA ligase (918 aa).

The 'HIGH' region signature appears at 50-60 (PNVTGSLHMGH). Residues 548–552 (KMSKS) carry the 'KMSKS' region motif. K551 contacts ATP. The stretch at 849–883 (NDFVNLEALKDRLTKDLKKVNSDIETLNKRISNKN) forms a coiled coil.

Belongs to the class-I aminoacyl-tRNA synthetase family. ValS type 1 subfamily. As to quaternary structure, monomer.

It localises to the cytoplasm. The catalysed reaction is tRNA(Val) + L-valine + ATP = L-valyl-tRNA(Val) + AMP + diphosphate. Catalyzes the attachment of valine to tRNA(Val). As ValRS can inadvertently accommodate and process structurally similar amino acids such as threonine, to avoid such errors, it has a 'posttransfer' editing activity that hydrolyzes mischarged Thr-tRNA(Val) in a tRNA-dependent manner. The chain is Valine--tRNA ligase from Prochlorococcus marinus subsp. pastoris (strain CCMP1986 / NIES-2087 / MED4).